The following is a 365-amino-acid chain: Pyridoxal reductase, chloroplastic (365 aa).

Residues 1 to 15 (MALTLSTTKTFTNIN) constitute a chloroplast transit peptide. The active-site Proton donor is tyrosine 94.

This sequence belongs to the aldo/keto reductase family. Monomer. As to expression, expressed in cotyledons, embryos, flowers, shoots, roots and seeds.

Its subcellular location is the plastid. It localises to the chloroplast. The enzyme catalyses pyridoxine + NADP(+) = pyridoxal + NADPH + H(+). It participates in cofactor degradation; B6 vitamer degradation; pyridoxal from pyridoxine (dehydrogenase route): step 1/1. In terms of biological role, catalyzes the reduction of pyridoxal (PL) with NADPH and oxidation of pyridoxine (PN) with NADP(+). Involved in the PLP salvage pathway. This chain is Pyridoxal reductase, chloroplastic (PLR1), found in Arabidopsis thaliana (Mouse-ear cress).